We begin with the raw amino-acid sequence, 108 residues long: Nucleoid-associated protein Bcen_6253 (108 aa).

The span at 85-95 (ATSQEKMSGMT) shows a compositional bias: polar residues. Positions 85-108 (ATSQEKMSGMTSGLPLPPGFKLPF) are disordered. Pro residues predominate over residues 99–108 (PLPPGFKLPF).

This sequence belongs to the YbaB/EbfC family. As to quaternary structure, homodimer.

The protein localises to the cytoplasm. The protein resides in the nucleoid. Its function is as follows. Binds to DNA and alters its conformation. May be involved in regulation of gene expression, nucleoid organization and DNA protection. This is Nucleoid-associated protein Bcen_6253 from Burkholderia orbicola (strain AU 1054).